The chain runs to 668 residues: Ecdysone oxidase (668 aa).

FAD-binding positions include 137-140, Val-270, and 536-537; these read NHMV and WH. Residue His-537 is the Proton acceptor of the active site.

Belongs to the GMC oxidoreductase family. The cofactor is FAD.

The enzyme catalyses ecdysone + O2 = 3-dehydroecdysone + H2O2. In terms of biological role, involved in the inactivation of ecdysteroid molting hormones by converting ecdysteroids into 3-dehydroecdysteroids. The chain is Ecdysone oxidase from Bombyx mori (Silk moth).